The primary structure comprises 1067 residues: Protein CLEC16A homolog (1067 aa).

The FPL domain occupies 50–199; sequence LRCIAEILIW…AVRTISLNVY (150 aa). Residues 333–353 form a helical membrane-spanning segment; that stretch reads SIVALFLLSLVFLVVSHAPLV. Residues 409 to 418 show a composition bias toward low complexity; the sequence is SSSSYALSED. Disordered regions lie at residues 409 to 434, 837 to 861, 876 to 993, and 1037 to 1067; these read SSSS…LDSQ, ASSS…PMFS, SNSA…SRSH, and QSSE…IETV. A compositionally biased stretch (polar residues) spans 421-432; sequence VESSSPATTELD. Residues 876–888 are compositionally biased toward polar residues; the sequence is SNSAGVSRTQMAP. The span at 917-926 shows a compositional bias: basic and acidic residues; that stretch reads RADHSDRERS. Low complexity predominate over residues 927–947; sequence PSVSMGSHSSSQSRENSQPRS. The segment covering 951–974 has biased composition (basic and acidic residues); it reads RSRESSPRMPRPRSEEIPLEDFQH. Positions 975-993 are enriched in polar residues; it reads SRNNSPHSRGNPSPASRSH. Residues 1057–1067 show a composition bias toward basic and acidic residues; sequence EGRRRGAIETV.

The protein belongs to the CLEC16A/gop-1 family. Interacts with the class C Vps-HOPS complex components; Car, Dor and Vps16a.

It localises to the cytoplasmic vesicle. Its subcellular location is the autophagosome membrane. The protein localises to the late endosome membrane. It is found in the golgi apparatus membrane. Its function is as follows. Required for mitophagy, autophagy and endosome maturation, possibly by acting in multiple membrane trafficking pathways. Required for endosome trafficking and maturation. Functions with the class C Vps-HOPS complex member Vps16a to promote endosomal maturation into degradative late endosomes and lysosomes. In response to starvation, functions at an early stage of autophagy to promote autophagosome growth and efficient autophagy. Essential for the recruitment of lva-positive Golgi elements to autophagosomes. Likely to function by promoting membrane traffic from the Golgi complex to the developing autophagosomes. Also regulates synaptic growth at the neuromuscular junctions (NMJ) by down-regulating BMP signaling. This Drosophila melanogaster (Fruit fly) protein is Protein CLEC16A homolog.